The primary structure comprises 201 residues: Testis-expressed protein 38 (201 aa).

Residues 3 to 23 (ISLCIGFLGLCSVLIGSCILF) form a helical membrane-spanning segment.

It localises to the membrane. The polypeptide is Testis-expressed protein 38 (Tex38) (Mus musculus (Mouse)).